The chain runs to 260 residues: MKKLVLSLSLVLAFSSATAAFAAIPQNIRIGTDPTYAPFESKNSQGELVGFDIDLAKELCKRINTQCTFVENPLDALIPSLKAKKIDAIMSSLSITEKRQQEIAFTDKLYAADSRLVVAKNSDIQPTVESLKGKRVGVLQGTTQETFGNEHWAPKGIEIVSYQGQDNIYSDLTAGRIDAAFQDEVAASEGFLKQPVGKDYKFGGPSVKDEKLFGVGTGMGLRKEDNELREALNKAFAEMRADGTYEKLAKKYFDFDVYGG.

The first 22 residues, 1–22 (MKKLVLSLSLVLAFSSATAAFA), serve as a signal peptide directing secretion. C60 and C67 are disulfide-bonded. 6 residues coordinate L-histidine: S91, S92, S94, R99, T143, and D183.

Belongs to the bacterial solute-binding protein 3 family. The complex is composed of two ATP-binding proteins (HisP), two transmembrane proteins (HisM and HisQ) and a solute-binding protein (HisJ).

The protein resides in the periplasm. Its function is as follows. Part of the ABC transporter complex HisPMQJ involved in histidine transport. Binds histidine. Interacts with HisQMP and stimulates ATPase activity of HisP, which results in histidine translocation. This is Histidine-binding periplasmic protein (hisJ) from Escherichia coli O157:H7.